The following is an 83-amino-acid chain: U-actitoxin-Aeq6b (83 aa).

Residues 1–20 (MIYKAVFVCLVLVLLGDVFC) form the signal peptide. A propeptide spanning residues 21 to 36 (SPRNSGGGTLNDNPFE) is cleaved from the precursor. Residue Pro82 is modified to Proline amide.

In terms of processing, contains 3 disulfide bonds. Expressed by acrorhagi.

It is found in the secreted. The protein localises to the nematocyst. Its function is as follows. Toxin. This Actinia equina (Beadlet anemone) protein is U-actitoxin-Aeq6b.